A 504-amino-acid polypeptide reads, in one-letter code: MGPGSQQKSEKLRSKSPLADMDGLHAQYVMLETIGHGGCATVKLAQHRLTGTHVAVKTIRKREYWCNRVISEVELLMMADHPNIISLLQVIETKKKVYLIMELCKGKSLYQHIRKAGYLQEHEARALFKQLLSAMNYCHNQGIVHRDLKPDNIMVEKDGKVKIIDFGLGTKVKPGQKLNLFCGTYPFSAPEVLLSTPYDGPKIDVWTLGVVLYFMVTGKIPFDACSIKKLVKRILAGKYSIPSRLSAELQDLLSLLMTANPKLRPTVAEVMVHPWVTEGSGVFPDPCEEQTPLKPDPAIVKAMGHIGFQAQDIEDSLRQRKFNQTMASYCLLKKQILKECDRPTRARPVNPSVTPFPSLVDTATTRLGLRRRENEPTCPWSSANRQVSVCGKSTSKKRDRRVSWPSVLGRPRHTAPTMDHTRTRTRSVPCICSMFCTVQPNSSEESTQGHTRASAADKPVHSRGWPRGIKGWTRMIGNAMRKLCCCIPSKETSHLGQNRVSPKK.

In terms of domain architecture, Protein kinase spans 28-276 (YVMLETIGHG…VAEVMVHPWV (249 aa)). Residues 34 to 42 (IGHGGCATV) and Lys-57 contribute to the ATP site. Asp-147 acts as the Proton acceptor in catalysis. A UBA domain is found at 294–334 (KPDPAIVKAMGHIGFQAQDIEDSLRQRKFNQTMASYCLLKK). Disordered regions lie at residues 389–421 (VCGK…MDHT) and 441–468 (NSSE…WPRG). Over residues 441-451 (NSSEESTQGHT) the composition is skewed to polar residues.

This sequence belongs to the protein kinase superfamily. CAMK Ser/Thr protein kinase family. Smok subfamily. Testis-specific. Expressed in the testis from 22 days postpartum (22 dpp).

It catalyses the reaction L-seryl-[protein] + ATP = O-phospho-L-seryl-[protein] + ADP + H(+). It carries out the reaction L-threonyl-[protein] + ATP = O-phospho-L-threonyl-[protein] + ADP + H(+). May play a role in sperm motility, especially in the regulation of flagellar function. The sequence is that of Sperm motility kinase 3A from Mus musculus (Mouse).